The chain runs to 240 residues: MSGHSKWHNIQGRKNAQDAKRGKIFQKISHDLYVAAKAGGADPSANASLRLVMDKAKAANMPKDNVQRALDKATGAGDVKFEEATYEGYAPGGIAVLVETSTDNINRTVSNVRNSFNHHGGSLGTSGSVSFQFDRRGHFVIDRQSHPDITEDQVMEDAIEAGAEDVQTSDDAFEIFSQPADFAAVEGALTDKGYDLAESEITMIPQNPVEVPEADQEKFEKLIDELEDNDDVLAVYTTAD.

Residues 1–21 form a disordered region; the sequence is MSGHSKWHNIQGRKNAQDAKR.

This sequence belongs to the TACO1 family.

The protein resides in the cytoplasm. The protein is Probable transcriptional regulatory protein OEOE_0768 of Oenococcus oeni (strain ATCC BAA-331 / PSU-1).